The sequence spans 762 residues: 5-methyltetrahydropteroyltriglutamate--homocysteine methyltransferase (762 aa).

5-methyltetrahydropteroyltri-L-glutamate is bound by residues 17–20 (REWK) and K111. Residues 435 to 437 (IGS) and E488 contribute to the L-homocysteine site. L-methionine is bound by residues 435-437 (IGS) and E488. 5-methyltetrahydropteroyltri-L-glutamate contacts are provided by residues 519-520 (RC) and W565. D603 contacts L-homocysteine. L-methionine is bound at residue D603. Residue E609 participates in 5-methyltetrahydropteroyltri-L-glutamate binding. Residues H645, C647, and E669 each coordinate Zn(2+). H698 acts as the Proton donor in catalysis. C730 contributes to the Zn(2+) binding site.

Belongs to the vitamin-B12 independent methionine synthase family. The cofactor is Zn(2+).

It catalyses the reaction 5-methyltetrahydropteroyltri-L-glutamate + L-homocysteine = tetrahydropteroyltri-L-glutamate + L-methionine. It functions in the pathway amino-acid biosynthesis; L-methionine biosynthesis via de novo pathway; L-methionine from L-homocysteine (MetE route): step 1/1. In terms of biological role, catalyzes the transfer of a methyl group from 5-methyltetrahydrofolate to homocysteine resulting in methionine formation. This chain is 5-methyltetrahydropteroyltriglutamate--homocysteine methyltransferase, found in Bacillus cereus (strain AH820).